The chain runs to 1561 residues: Formin-E (1561 aa).

Over residues methionine 1 to serine 28 the composition is skewed to low complexity. Disordered stretches follow at residues methionine 1–proline 63, glutamate 77–serine 187, proline 211–aspartate 279, and isoleucine 305–tyrosine 365. Over residues aspartate 29–glutamate 51 the composition is skewed to basic and acidic residues. A coiled-coil region spans residues lysine 32–glutamate 85. Residues glutamate 80 to lysine 89 are compositionally biased toward acidic residues. The span at aspartate 103 to proline 120 shows a compositional bias: polar residues. A coiled-coil region spans residues glutamate 158–valine 208. Residues glutamine 162–serine 187 are compositionally biased toward basic and acidic residues. Residues serine 220 to serine 229 are compositionally biased toward pro residues. Residues isoleucine 230–threonine 258 are compositionally biased toward low complexity. The span at isoleucine 305 to asparagine 320 shows a compositional bias: polar residues. Residues asparagine 326–tyrosine 365 are compositionally biased toward low complexity. The segment at tyrosine 379–cysteine 427 adopts a Phorbol-ester/DAG-type zinc-finger fold. Over residues proline 465–serine 534 the composition is skewed to low complexity. The interval proline 465–glutamine 549 is disordered. Positions leucine 541 to glutamine 573 form a coiled coil. The region spanning serine 581–glutamate 929 is the GBD/FH3 domain. Positions leucine 952 to aspartate 989 form a coiled coil. 3 disordered regions span residues methionine 1009–proline 1092, glutamate 1466–aspartate 1508, and arginine 1526–asparagine 1561. Over residues serine 1017–alanine 1033 the composition is skewed to low complexity. The region spanning lysine 1019–valine 1081 is the FH1 domain. Positions proline 1034–glycine 1070 are enriched in pro residues. A compositionally biased stretch (low complexity) spans lysine 1071–valine 1081. The 390-residue stretch at proline 1086 to glutamine 1475 folds into the FH2 domain. A coiled-coil region spans residues leucine 1398–alanine 1491. Residues glutamate 1466 to valine 1481 are compositionally biased toward basic and acidic residues. Composition is skewed to polar residues over residues leucine 1484–alanine 1498 and histidine 1536–asparagine 1561. The DAD domain maps to asparagine 1488 to alanine 1518.

Belongs to the formin homology family. Diaphanous subfamily. As to quaternary structure, interacts (via GBD/FH3 domain) with activated Rho-GTPases.

Its function is as follows. Formins play an important role in the nucleation of actin and the formation of linear actin filaments. In Dictyostelium discoideum (Social amoeba), this protein is Formin-E (forE).